An 83-amino-acid polypeptide reads, in one-letter code: MAGGSTGERPFTDIITSIRYWVIHSITIPALFIAGWLFVSTGLAYDAFGTPRPNEYFTQDRTEVPIVSDRYSAKQQVDRFSAK.

A helical transmembrane segment spans residues 22-36 (VIHSITIPALFIAGW). H24 lines the heme pocket.

It belongs to the PsbE/PsbF family. As to quaternary structure, heterodimer of an alpha subunit and a beta subunit. PSII is composed of 1 copy each of membrane proteins PsbA, PsbB, PsbC, PsbD, PsbE, PsbF, PsbH, PsbI, PsbJ, PsbK, PsbL, PsbM, PsbT, PsbX, PsbY, PsbZ, Psb30/Ycf12, peripheral proteins PsbO, CyanoQ (PsbQ), PsbU, PsbV and a large number of cofactors. It forms dimeric complexes. The cofactor is heme b.

Its subcellular location is the cellular thylakoid membrane. Functionally, this b-type cytochrome is tightly associated with the reaction center of photosystem II (PSII). PSII is a light-driven water:plastoquinone oxidoreductase that uses light energy to abstract electrons from H(2)O, generating O(2) and a proton gradient subsequently used for ATP formation. It consists of a core antenna complex that captures photons, and an electron transfer chain that converts photonic excitation into a charge separation. This is Cytochrome b559 subunit alpha from Synechococcus elongatus (strain ATCC 33912 / PCC 7942 / FACHB-805) (Anacystis nidulans R2).